Here is a 125-residue protein sequence, read N- to C-terminus: Large-conductance mechanosensitive channel (125 aa).

Transmembrane regions (helical) follow at residues 14–34 (VIDL…VQSL) and 67–87 (GSFL…FLIV).

It belongs to the MscL family. In terms of assembly, homopentamer.

The protein resides in the cell membrane. Channel that opens in response to stretch forces in the membrane lipid bilayer. May participate in the regulation of osmotic pressure changes within the cell. In Lactobacillus helveticus (strain DPC 4571), this protein is Large-conductance mechanosensitive channel.